The primary structure comprises 252 residues: Ribosomal RNA small subunit methyltransferase J (252 aa).

S-adenosyl-L-methionine is bound by residues 101–102, 117–118, 153–154, and aspartate 171; these read RD, ER, and SS.

It belongs to the methyltransferase superfamily. RsmJ family.

Its subcellular location is the cytoplasm. It catalyses the reaction guanosine(1516) in 16S rRNA + S-adenosyl-L-methionine = N(2)-methylguanosine(1516) in 16S rRNA + S-adenosyl-L-homocysteine + H(+). Specifically methylates the guanosine in position 1516 of 16S rRNA. The sequence is that of Ribosomal RNA small subunit methyltransferase J from Salmonella heidelberg (strain SL476).